The primary structure comprises 317 residues: Beta-ketoacyl-[acyl-carrier-protein] synthase III (317 aa).

Catalysis depends on residues C112 and H244. The tract at residues 245–249 (QANVR) is ACP-binding. The active site involves N274.

The protein belongs to the thiolase-like superfamily. FabH family. In terms of assembly, homodimer.

Its subcellular location is the cytoplasm. It catalyses the reaction malonyl-[ACP] + acetyl-CoA + H(+) = 3-oxobutanoyl-[ACP] + CO2 + CoA. The protein operates within lipid metabolism; fatty acid biosynthesis. Functionally, catalyzes the condensation reaction of fatty acid synthesis by the addition to an acyl acceptor of two carbons from malonyl-ACP. Catalyzes the first condensation reaction which initiates fatty acid synthesis and may therefore play a role in governing the total rate of fatty acid production. Possesses both acetoacetyl-ACP synthase and acetyl transacylase activities. Its substrate specificity determines the biosynthesis of branched-chain and/or straight-chain of fatty acids. The sequence is that of Beta-ketoacyl-[acyl-carrier-protein] synthase III from Rickettsia canadensis (strain McKiel).